The primary structure comprises 340 residues: Glycerol-3-phosphate dehydrogenase [NAD(P)+] (340 aa).

Positions 14, 15, 35, and 109 each coordinate NADPH. Sn-glycerol 3-phosphate-binding residues include Lys-109, Gly-138, and Thr-140. Ala-142 is an NADPH binding site. Positions 194, 247, 257, 258, and 259 each coordinate sn-glycerol 3-phosphate. Lys-194 acts as the Proton acceptor in catalysis. Arg-258 contributes to the NADPH binding site. Val-282 and Glu-284 together coordinate NADPH.

It belongs to the NAD-dependent glycerol-3-phosphate dehydrogenase family.

The protein resides in the cytoplasm. It carries out the reaction sn-glycerol 3-phosphate + NAD(+) = dihydroxyacetone phosphate + NADH + H(+). The catalysed reaction is sn-glycerol 3-phosphate + NADP(+) = dihydroxyacetone phosphate + NADPH + H(+). The protein operates within membrane lipid metabolism; glycerophospholipid metabolism. In terms of biological role, catalyzes the reduction of the glycolytic intermediate dihydroxyacetone phosphate (DHAP) to sn-glycerol 3-phosphate (G3P), the key precursor for phospholipid synthesis. In Photorhabdus laumondii subsp. laumondii (strain DSM 15139 / CIP 105565 / TT01) (Photorhabdus luminescens subsp. laumondii), this protein is Glycerol-3-phosphate dehydrogenase [NAD(P)+].